Here is a 226-residue protein sequence, read N- to C-terminus: tRNA (guanine-N(7)-)-methyltransferase (226 aa).

Residues Glu57, Glu82, Asp109, and Asp132 each coordinate S-adenosyl-L-methionine. Asp132 is an active-site residue. Residues Lys136, Asp168, and 205–208 (TKFE) contribute to the substrate site.

This sequence belongs to the class I-like SAM-binding methyltransferase superfamily. TrmB family.

The enzyme catalyses guanosine(46) in tRNA + S-adenosyl-L-methionine = N(7)-methylguanosine(46) in tRNA + S-adenosyl-L-homocysteine. It participates in tRNA modification; N(7)-methylguanine-tRNA biosynthesis. Functionally, catalyzes the formation of N(7)-methylguanine at position 46 (m7G46) in tRNA. This chain is tRNA (guanine-N(7)-)-methyltransferase, found in Legionella pneumophila subsp. pneumophila (strain Philadelphia 1 / ATCC 33152 / DSM 7513).